The following is a 62-amino-acid chain: Photosystem II reaction center protein Z (62 aa).

A run of 2 helical transmembrane segments spans residues 8–28 and 41–61; these read ALFA…VAFA and FSGA…NSFI.

Belongs to the PsbZ family. PSII is composed of 1 copy each of membrane proteins PsbA, PsbB, PsbC, PsbD, PsbE, PsbF, PsbH, PsbI, PsbJ, PsbK, PsbL, PsbM, PsbT, PsbY, PsbZ, Psb30/Ycf12, at least 3 peripheral proteins of the oxygen-evolving complex and a large number of cofactors. It forms dimeric complexes.

It is found in the plastid. It localises to the chloroplast thylakoid membrane. May control the interaction of photosystem II (PSII) cores with the light-harvesting antenna, regulates electron flow through the 2 photosystem reaction centers. PSII is a light-driven water plastoquinone oxidoreductase, using light energy to abstract electrons from H(2)O, generating a proton gradient subsequently used for ATP formation. In Adiantum capillus-veneris (Maidenhair fern), this protein is Photosystem II reaction center protein Z.